A 229-amino-acid chain; its full sequence is UPF0758 protein MA_1979 (229 aa).

One can recognise an MPN domain in the interval 106 to 228 (KICSPKDVYA…YVSLKDEGFV (123 aa)). The Zn(2+) site is built by H177, H179, and D190. The JAMM motif motif lies at 177–190 (HNHPSGDPSPSRED).

It belongs to the UPF0758 family.

This is UPF0758 protein MA_1979 from Methanosarcina acetivorans (strain ATCC 35395 / DSM 2834 / JCM 12185 / C2A).